The sequence spans 375 residues: Neuropeptide Y receptor type 4 (375 aa).

The Extracellular portion of the chain corresponds to 1–39 (MNTSHLMASLSPAFLQGKNGTNPLDSLYNLSDGCQDSAD). N-linked (GlcNAc...) asparagine glycosylation is found at Asn-2, Asn-19, and Asn-29. A helical transmembrane segment spans residues 40-60 (LLAFIITTYSVETVLGVLGNL). Residues 61–78 (CLIFVTTRQKEKSNVTNL) are Cytoplasmic-facing. A helical transmembrane segment spans residues 79-99 (LIANLAFSDFLMCLICQPLTV). At 100–116 (TYTIMDYWIFGEVLCKM) the chain is on the extracellular side. Cys-114 and Cys-201 are oxidised to a cystine. The chain crosses the membrane as a helical span at residues 117–137 (LTFIQCMSVTVSILSLVLVAL). Residues 138 to 155 (ERHQLIINPTGWKPSISQ) lie on the Cytoplasmic side of the membrane. The chain crosses the membrane as a helical span at residues 156–176 (AYLGIVVIWFISCFLSLPFLA). The Extracellular portion of the chain corresponds to 177 to 211 (NSILNDLFHYNHSKVVEFLEDKVVCFVSWSSDHHR). Residue Asn-187 is glycosylated (N-linked (GlcNAc...) asparagine). A helical membrane pass occupies residues 212–232 (LIYTTFLLLFQYCVPLAFILV). At 233–262 (CYMRIYQRLQRQRRAFHTHTCSSRVGQMKR) the chain is on the cytoplasmic side. A helical membrane pass occupies residues 263–283 (INGMLMAMVTAFAVLWLPLHV). Topologically, residues 284 to 301 (FNTLEDWYQEAIPACHGN) are extracellular. A helical transmembrane segment spans residues 302 to 322 (LIFLMCHLFAMASTCVNPFIY). Residues 323-375 (GFLNINFKKDIKALVLTCRCRPPQGEPEPLPLSTVHTDLSKGSMRMGSKSNVM) lie on the Cytoplasmic side of the membrane. Cys-340 carries S-palmitoyl cysteine lipidation.

Belongs to the G-protein coupled receptor 1 family. As to expression, detected in colon and brain.

It is found in the cell membrane. Functionally, g protein-coupled receptor for PPY/pancreatic polypeptide/PP that is negatively coupled to cAMP. Has much lower affinity for the NPY/neuropeptide Y and PYY/peptide YY. This is Neuropeptide Y receptor type 4 (Npy4r) from Rattus norvegicus (Rat).